The primary structure comprises 152 residues: Transcriptional repressor NrdR (152 aa).

A zinc finger spans residues 3–34 (CPHCHHNGSRVIDSRPAEDGMSIRRRRECVNC). An ATP-cone domain is found at 49–139 (LLVVKKDGTR…VYRQFKDVDA (91 aa)).

It belongs to the NrdR family. Zn(2+) serves as cofactor.

In terms of biological role, negatively regulates transcription of bacterial ribonucleotide reductase nrd genes and operons by binding to NrdR-boxes. This is Transcriptional repressor NrdR from Limosilactobacillus fermentum (strain NBRC 3956 / LMG 18251) (Lactobacillus fermentum).